The sequence spans 274 residues: ATP synthase subunit delta (274 aa).

The protein belongs to the ATPase delta chain family. As to quaternary structure, F-type ATPases have 2 components, F(1) - the catalytic core - and F(0) - the membrane proton channel. F(1) has five subunits: alpha(3), beta(3), gamma(1), delta(1), epsilon(1). F(0) has three main subunits: a(1), b(2) and c(10-14). The alpha and beta chains form an alternating ring which encloses part of the gamma chain. F(1) is attached to F(0) by a central stalk formed by the gamma and epsilon chains, while a peripheral stalk is formed by the delta and b chains.

It is found in the cell membrane. F(1)F(0) ATP synthase produces ATP from ADP in the presence of a proton or sodium gradient. F-type ATPases consist of two structural domains, F(1) containing the extramembraneous catalytic core and F(0) containing the membrane proton channel, linked together by a central stalk and a peripheral stalk. During catalysis, ATP synthesis in the catalytic domain of F(1) is coupled via a rotary mechanism of the central stalk subunits to proton translocation. In terms of biological role, this protein is part of the stalk that links CF(0) to CF(1). It either transmits conformational changes from CF(0) to CF(1) or is implicated in proton conduction. The protein is ATP synthase subunit delta of Salinispora arenicola (strain CNS-205).